We begin with the raw amino-acid sequence, 570 residues long: Proline--tRNA ligase (570 aa).

This sequence belongs to the class-II aminoacyl-tRNA synthetase family. ProS type 1 subfamily. Homodimer.

It localises to the cytoplasm. It catalyses the reaction tRNA(Pro) + L-proline + ATP = L-prolyl-tRNA(Pro) + AMP + diphosphate. Its function is as follows. Catalyzes the attachment of proline to tRNA(Pro) in a two-step reaction: proline is first activated by ATP to form Pro-AMP and then transferred to the acceptor end of tRNA(Pro). As ProRS can inadvertently accommodate and process non-cognate amino acids such as alanine and cysteine, to avoid such errors it has two additional distinct editing activities against alanine. One activity is designated as 'pretransfer' editing and involves the tRNA(Pro)-independent hydrolysis of activated Ala-AMP. The other activity is designated 'posttransfer' editing and involves deacylation of mischarged Ala-tRNA(Pro). The misacylated Cys-tRNA(Pro) is not edited by ProRS. The protein is Proline--tRNA ligase of Clostridium perfringens (strain SM101 / Type A).